The sequence spans 537 residues: MMASTTSATAAGGAFAAAKTRAGSSAAGGGACARVAAGGRRRSGVVVRCDAGVEAQAQAQAVAKAASVAALEQFKISADRYMKERSSIAVIGLSVHTAPVEMREKLAVAEELWPRAISELTSLNHIEEAAVLSTCNRMEIYVVALSWNRGIREVVDWMSKKSGIPASELREHLFMLRDSDATRHLFEVSAGLDSLVLGEGQILAQVKQVVRSGQNSGGLGKNIDRMFKDAITAGKRVRCETNISSGAVSVSSAAVELALMKLPKSECLSARMLLIGAGKMGKLVVKHLIAKGCKKVVVVNRSVERVDAIREEMKDIEIVYRPLTEMYEAAAEADVVFTSTASETPLFTKEHAEALPAISDAMGGVRLFVDISVPRNVSACVSEVGHARVYNVDDLKEVVEANKEDRLRKAMEAQTIITQELKRFEAWRDSLETVPTIKKLRSYADRIRASELEKCLQKIGEDALTKKMRRSIEELSTGIVNKLLHGPLQHLRCDGSDSRTLDETLENMHALNRMFSLDTEKAIIEQKIKAKVEKSQN.

A chloroplast-targeting transit peptide spans 1-48 (MMASTTSATAAGGAFAAAKTRAGSSAAGGGACARVAAGGRRRSGVVVR). Residues 134-137 (TCNR), Ser-194, 199-201 (EGQ), and Gln-205 contribute to the substrate site. The active-site Nucleophile is Cys-135. An NADP(+)-binding site is contributed by 276–281 (GAGKMG).

It belongs to the glutamyl-tRNA reductase family.

It localises to the plastid. Its subcellular location is the chloroplast. It catalyses the reaction (S)-4-amino-5-oxopentanoate + tRNA(Glu) + NADP(+) = L-glutamyl-tRNA(Glu) + NADPH + H(+). Its pathway is porphyrin-containing compound metabolism; protoporphyrin-IX biosynthesis; 5-aminolevulinate from L-glutamyl-tRNA(Glu): step 1/2. Catalyzes the NADPH-dependent reduction of glutamyl-tRNA(Glu) to glutamate 1-semialdehyde (GSA). In Oryza sativa subsp. japonica (Rice), this protein is Glutamyl-tRNA reductase, chloroplastic.